We begin with the raw amino-acid sequence, 158 residues long: D-aminoacyl-tRNA deacylase (158 aa).

A Gly-cisPro motif, important for rejection of L-amino acids motif is present at residues 144 to 145 (GP).

Belongs to the DTD family. As to quaternary structure, homodimer.

Its subcellular location is the cytoplasm. It carries out the reaction glycyl-tRNA(Ala) + H2O = tRNA(Ala) + glycine + H(+). The catalysed reaction is a D-aminoacyl-tRNA + H2O = a tRNA + a D-alpha-amino acid + H(+). An aminoacyl-tRNA editing enzyme that deacylates mischarged D-aminoacyl-tRNAs. Also deacylates mischarged glycyl-tRNA(Ala), protecting cells against glycine mischarging by AlaRS. Acts via tRNA-based rather than protein-based catalysis; rejects L-amino acids rather than detecting D-amino acids in the active site. By recycling D-aminoacyl-tRNA to D-amino acids and free tRNA molecules, this enzyme counteracts the toxicity associated with the formation of D-aminoacyl-tRNA entities in vivo and helps enforce protein L-homochirality. The sequence is that of D-aminoacyl-tRNA deacylase from Corynebacterium kroppenstedtii (strain DSM 44385 / JCM 11950 / CIP 105744 / CCUG 35717).